A 446-amino-acid polypeptide reads, in one-letter code: MTHKVKIHRLSDLSAEQRNKLLQRTESNLDNFIDIVKPIIENVKLNGDKALSEYAKKFDKAEVSTDQIQVTQAEFDEAFTLVDEEVIQTLSYSIDNIKKFHEAQMPEEMWMKQIRPGCYAGDRFTPINAVACYIPRGKGSFPSVAIMTAVPAIVAGVPTAIIITPPGTDGKVDAATLVVAKLVGIDKVFKCGGAQGIAAVAYGTNTVPKCDKVVGPGSPFVVAAKKLLADIIHPGTPAGPSEAIVLADDTANPKLAALDLLVEAEHGPDSSAFLVTNSKELAEQAQVAINEYWQHMDRLRVDFSSTVLSGDNGGIVLTSTFEEAVDFCNDYAAEHLLILSKSPFDHLGKIINAGEILLGENTPISIANYTLGPNAVLPTSMAAKTASPLSVFDYLKSCSIGYLTREGYEELAPHTYRFAKYEGFDAHANAVSHLRDEAIKSEKKIK.

H266 lines the Zn(2+) pocket. Residues E334 and H335 each act as proton acceptor in the active site. H427 serves as a coordination point for Zn(2+).

It belongs to the histidinol dehydrogenase family. Zn(2+) is required as a cofactor.

This chain is Histidinol dehydrogenase homolog, found in Colwellia psychrerythraea (strain 34H / ATCC BAA-681) (Vibrio psychroerythus).